Here is an 896-residue protein sequence, read N- to C-terminus: Translation initiation factor IF-2 (896 aa).

A compositionally biased stretch (basic and acidic residues) spans 93–219 (VKRDPQEAER…RMAEENEKNW (127 aa)). The segment at 93–307 (VKRDPQEAER…GSALQQGFQK (215 aa)) is disordered. A compositionally biased stretch (basic residues) spans 256-271 (GRSRSSKAARPAKKGN). A compositionally biased stretch (basic and acidic residues) spans 272 to 285 (KHAESKADREEARA). One can recognise a tr-type G domain in the interval 395 to 564 (PRAPVVTIMG…LLQAEVLELK (170 aa)). Positions 404 to 411 (GHVDHGKT) are G1. A GTP-binding site is contributed by 404 to 411 (GHVDHGKT). Residues 429–433 (GITQH) are G2. A G3 region spans residues 450–453 (DTPG). GTP-binding positions include 450-454 (DTPGH) and 504-507 (NKID). Residues 504–507 (NKID) are G4. The interval 540-542 (SAK) is G5.

This sequence belongs to the TRAFAC class translation factor GTPase superfamily. Classic translation factor GTPase family. IF-2 subfamily.

The protein localises to the cytoplasm. In terms of biological role, one of the essential components for the initiation of protein synthesis. Protects formylmethionyl-tRNA from spontaneous hydrolysis and promotes its binding to the 30S ribosomal subunits. Also involved in the hydrolysis of GTP during the formation of the 70S ribosomal complex. This chain is Translation initiation factor IF-2, found in Klebsiella pneumoniae (strain 342).